The sequence spans 455 residues: Indoleacetamide hydrolase (455 aa).

Residues Lys-71 and Ser-146 each act as charge relay system in the active site. Ser-170 (acyl-ester intermediate) is an active-site residue.

The protein belongs to the amidase family.

It participates in plant hormone metabolism; auxin biosynthesis. Functionally, hydrolyzes indole-3-acetamide (IAM) into indole-3-acetic acid (IAA). In Pseudomonas savastanoi (Pseudomonas syringae pv. savastanoi), this protein is Indoleacetamide hydrolase (iaaH).